Here is a 369-residue protein sequence, read N- to C-terminus: Protein RecA (369 aa).

ATP is bound at residue 66-73 (GPESSGKT). The tract at residues 328–369 (GIDAESLEEKEDPEKVKEQRAKKAAPGEEKPAEPASPEKTDK) is disordered. Over residues 339-369 (DPEKVKEQRAKKAAPGEEKPAEPASPEKTDK) the composition is skewed to basic and acidic residues.

The protein belongs to the RecA family.

It localises to the cytoplasm. Its function is as follows. Can catalyze the hydrolysis of ATP in the presence of single-stranded DNA, the ATP-dependent uptake of single-stranded DNA by duplex DNA, and the ATP-dependent hybridization of homologous single-stranded DNAs. It interacts with LexA causing its activation and leading to its autocatalytic cleavage. The chain is Protein RecA from Lactobacillus delbrueckii subsp. bulgaricus (strain ATCC BAA-365 / Lb-18).